We begin with the raw amino-acid sequence, 864 residues long: Leucine--tRNA ligase (864 aa).

A 'HIGH' region motif is present at residues 42 to 52; it reads PYPSGKLHMGH. Positions 624–628 match the 'KMSKS' region motif; it reads KMSKS. ATP is bound at residue Lys627.

The protein belongs to the class-I aminoacyl-tRNA synthetase family.

It localises to the cytoplasm. The catalysed reaction is tRNA(Leu) + L-leucine + ATP = L-leucyl-tRNA(Leu) + AMP + diphosphate. In Burkholderia cenocepacia (strain ATCC BAA-245 / DSM 16553 / LMG 16656 / NCTC 13227 / J2315 / CF5610) (Burkholderia cepacia (strain J2315)), this protein is Leucine--tRNA ligase.